Here is a 590-residue protein sequence, read N- to C-terminus: NADH-ubiquinone oxidoreductase chain 5 (590 aa).

15 helical membrane-spanning segments follow: residues 1-21 (MNLITPTIILTIMLSLMMSIM), 31-51 (LMVLFLISLIPINPLLNNNEL), 77-97 (LLFTPIALFITWSITEFSLWY), 104-124 (INKFIKYLLTFLITMLVIITA), 130-150 (LFIGWEGVGIMSFLLIGWWHG), 167-187 (IGDIGLIMTTAWMMTTSSINM), 190-210 (LMIQHEVVNIIPLLGLVAAAT), 230-250 (TPVSALLHSSTMVVAGVFLLI), 261-281 (IMLTCCLILGATTTMFAAAAA), 314-336 (AFLHMITHSFFKAMLFLCSGSYI), 355-375 (LPMTSSFLTIANLSLMGMPFL), 398-418 (IMITMIATILSACYSTQIMLF), 439-461 (HPLARLMLTSILMGTMTKMSTLQ), 466-486 (VTMPKTIKLMALISTIIGVLL), and 568-588 (MIKNYMAIFTMTTMTVLLFIM).

Belongs to the complex I subunit 5 family.

It localises to the mitochondrion inner membrane. The enzyme catalyses a ubiquinone + NADH + 5 H(+)(in) = a ubiquinol + NAD(+) + 4 H(+)(out). Functionally, core subunit of the mitochondrial membrane respiratory chain NADH dehydrogenase (Complex I) that is believed to belong to the minimal assembly required for catalysis. Complex I functions in the transfer of electrons from NADH to the respiratory chain. The immediate electron acceptor for the enzyme is believed to be ubiquinone. This is NADH-ubiquinone oxidoreductase chain 5 (MT-ND5) from Lycodon semicarinatus (Ryukyu odd-tooth snake).